The sequence spans 448 residues: Glutamyl-tRNA reductase (448 aa).

Residues 49–52, Ser109, 114–116, and Gln120 contribute to the substrate site; these read TCNR and ETQ. Cys50 (nucleophile) is an active-site residue. 189-194 contacts NADP(+); sequence GAGETG. Residues 427–448 form a disordered region; that stretch reads PVDEVEETDATSAKAPLRALMR.

The protein belongs to the glutamyl-tRNA reductase family. In terms of assembly, homodimer.

It catalyses the reaction (S)-4-amino-5-oxopentanoate + tRNA(Glu) + NADP(+) = L-glutamyl-tRNA(Glu) + NADPH + H(+). Its pathway is porphyrin-containing compound metabolism; protoporphyrin-IX biosynthesis; 5-aminolevulinate from L-glutamyl-tRNA(Glu): step 1/2. Its function is as follows. Catalyzes the NADPH-dependent reduction of glutamyl-tRNA(Glu) to glutamate 1-semialdehyde (GSA). In Exiguobacterium sp. (strain ATCC BAA-1283 / AT1b), this protein is Glutamyl-tRNA reductase.